The primary structure comprises 330 residues: Cobalamin biosynthesis protein CobD (330 aa).

A run of 4 helical transmembrane segments spans residues 60–80 (TLVI…PPIV), 153–173 (GIIA…LLGV), 227–247 (LGIV…WKIF), and 308–328 (IVLF…FVLT).

The protein belongs to the CobD/CbiB family.

The protein localises to the cell membrane. It participates in cofactor biosynthesis; adenosylcobalamin biosynthesis. Functionally, converts cobyric acid to cobinamide by the addition of aminopropanol on the F carboxylic group. This Desulfotalea psychrophila (strain LSv54 / DSM 12343) protein is Cobalamin biosynthesis protein CobD.